Consider the following 336-residue polypeptide: Protein phosphatase 1 regulatory subunit pprA (336 aa).

Residues 1 to 10 (MSEQNTIINS) are compositionally biased toward low complexity. The disordered stretch occupies residues 1–24 (MSEQNTIINSEEIKENEKIESETE). The segment covering 11–21 (EEIKENEKIES) has biased composition (basic and acidic residues). 12 LRR repeats span residues 26 to 47 (PITYLDLTGQPHTSIGDSYNIP), 49 to 70 (TLLDLDLTNCKITKIENINHLK), 71 to 92 (NLKKLCFRQNLIEKIENIDQLK), 93 to 114 (ELESLDLYDNKLQVIENIKDFQ), 115 to 136 (SLTYLDLSFNEIRIVENLSIKD), 139 to 160 (KIKELYLANNKITKIENLQELV), 161 to 182 (PIKNLELGSNRLREIENLENLV), 183 to 204 (NIETLWLGRNKITEIKGINHLS), 205 to 225 (HLRILSLQSNRLTEIGVKGLV), 229 to 250 (CLEELYLSHNGITDIDGLQSLK), 251 to 272 (QLRTLDISANKIKTLVGLNELP), and 273 to 294 (DLDEIWCNDNLVDSMDNIEQQV). One can recognise an LRRCT domain in the interval 306–336 (NPVATHVQYRRMFINMFPQLKQLDATMVKRN).

This sequence belongs to the SDS22 family.

It localises to the nucleus. Functionally, regulatory subunit of protein phosphatase 1. In Dictyostelium discoideum (Social amoeba), this protein is Protein phosphatase 1 regulatory subunit pprA (pprA).